A 152-amino-acid chain; its full sequence is UPF0178 protein KPN78578_03210 (152 aa).

The protein belongs to the UPF0178 family.

This chain is UPF0178 protein KPN78578_03210, found in Klebsiella pneumoniae subsp. pneumoniae (strain ATCC 700721 / MGH 78578).